A 143-amino-acid polypeptide reads, in one-letter code: MALQRTFSIIKPDAVAKNVIGEITTRFEKAGLRVVASKMVQLSEREAAGFYAEHSERGFFKDLVAFMTSGPVIVQVLEGENAVAKNRELMGATNPKEAAPGTIRADFAVSIDENAVHGSDSEASAAREIAYFFAATEVCARIR.

The ATP site is built by Lys-11, Phe-59, Arg-87, Thr-93, Arg-104, and Asn-114. His-117 functions as the Pros-phosphohistidine intermediate in the catalytic mechanism.

This sequence belongs to the NDK family. Homotetramer. Requires Mg(2+) as cofactor.

Its subcellular location is the cytoplasm. The catalysed reaction is a 2'-deoxyribonucleoside 5'-diphosphate + ATP = a 2'-deoxyribonucleoside 5'-triphosphate + ADP. The enzyme catalyses a ribonucleoside 5'-diphosphate + ATP = a ribonucleoside 5'-triphosphate + ADP. In terms of biological role, major role in the synthesis of nucleoside triphosphates other than ATP. The ATP gamma phosphate is transferred to the NDP beta phosphate via a ping-pong mechanism, using a phosphorylated active-site intermediate. The polypeptide is Nucleoside diphosphate kinase (Stutzerimonas stutzeri (strain A1501) (Pseudomonas stutzeri)).